The following is an 81-amino-acid chain: uncharacterized protein (81 aa).

A signal peptide spans 1–22 (MNKKLSIIFLIFALIASVLCSA). Residues 29–81 (HSSSTTTTTSSSGGTSGTDSSINTGSSYSGSGSGSGSTGGSGSGSGSGTAKWK) are disordered. A compositionally biased stretch (low complexity) spans 30 to 58 (SSSTTTTTSSSGGTSGTDSSINTGSSYSG). Residues 59–75 (SGSGSGSTGGSGSGSGS) show a composition bias toward gly residues.

The protein localises to the secreted. This is an uncharacterized protein from Dictyostelium discoideum (Social amoeba).